Consider the following 446-residue polypeptide: N-succinylarginine dihydrolase (446 aa).

Substrate is bound by residues 19–28, Asn110, and 137–138; these read AGLSFGNVAS and HR. Glu174 is a catalytic residue. Substrate is bound at residue Arg213. The active site involves His249. Substrate-binding residues include Asp251 and Asn364. Cys370 functions as the Nucleophile in the catalytic mechanism.

This sequence belongs to the succinylarginine dihydrolase family. Homodimer.

The enzyme catalyses N(2)-succinyl-L-arginine + 2 H2O + 2 H(+) = N(2)-succinyl-L-ornithine + 2 NH4(+) + CO2. The protein operates within amino-acid degradation; L-arginine degradation via AST pathway; L-glutamate and succinate from L-arginine: step 2/5. Functionally, catalyzes the hydrolysis of N(2)-succinylarginine into N(2)-succinylornithine, ammonia and CO(2). This chain is N-succinylarginine dihydrolase, found in Burkholderia lata (strain ATCC 17760 / DSM 23089 / LMG 22485 / NCIMB 9086 / R18194 / 383).